Reading from the N-terminus, the 1295-residue chain is DNA-directed RNA polymerase subunit beta' (1295 aa).

Zn(2+) contacts are provided by C66, C68, C81, and C84. Mg(2+) contacts are provided by D562, D564, and D566. Zn(2+) contacts are provided by C901, C975, C982, and C985.

This sequence belongs to the RNA polymerase beta' chain family. In terms of assembly, the RNAP catalytic core consists of 2 alpha, 1 beta, 1 beta' and 1 omega subunit. When a sigma factor is associated with the core the holoenzyme is formed, which can initiate transcription. Mg(2+) serves as cofactor. The cofactor is Zn(2+).

It catalyses the reaction RNA(n) + a ribonucleoside 5'-triphosphate = RNA(n+1) + diphosphate. Its function is as follows. DNA-dependent RNA polymerase catalyzes the transcription of DNA into RNA using the four ribonucleoside triphosphates as substrates. The protein is DNA-directed RNA polymerase subunit beta' of Rubrobacter xylanophilus (strain DSM 9941 / JCM 11954 / NBRC 16129 / PRD-1).